Consider the following 1044-residue polypeptide: MENAHTKTVEEVLGHFGVNESTGLSLEQVKKLKERWGSNELPAEEGKTLLELVIEQFEDLLVRILLLAACISFVLAWFEEGEETITAFVEPFVILLILVANAIVGVWQERNAENAIEALKEYEPEMGKVYRQDRKSVQRIKAKDIVPGDIVEIAVGDKVPADIRLTSIKSTTLRVDQSILTGESVSVIKHTDPVPDPRAVNQDKKNMLFSGTNIAAGKAMGVVVATGVNTEIGKIRDEMVATEQERTPLQQKLDEFGEQLSKVISLICIAVWIINIGHFNDPVHGGSWIRGAIYYFKIAVALAVAAIPEGLPAVITTCLALGTRRMAKKNAIVRSLPSVETLGCTSVICSDKTGTLTTNQMSVCRMFILDKVEGDTCSLNEFSITGSTYAPIGEVQKDDKPVKCHQYDGLVELATICALCNDSALDYNEAKGVYEKVGEATETALTCLVEKMNVFDTELKGLSKIERANACNSVIKQLMKKEFTLEFSRDRKSMSVYCTPNKPSRTSMSKMFVKGAPEGVIDRCTHIRVGSTKVPMTPGVKQKIMSVIREWGSGSDTLRCLALATHDNPLKREEMHLEDSANFIKYETNLTFVGCVGMLDPPRIEVASSVKLCRQAGIRVIMITGDNKGTAVAICRRIGIFGQDEDVTSKAFTGREFDELSPSAQRDACLNARCFARVEPSHKSKIVEFLQSFDEITAMTGDGVNDAPALKKSEIGIAMGSGTAVAKTASEMVLADDNFSTIVAAVEEGRAIYNNMKQFIRYLISSNVGEVVCIFLTAALGFPEALIPVQLLWVNLVTDGLPATALGFNPPDLDIMNKPPRNPKEPLISGWLFFRYLAIGCYVGAATVGAAAWWFIAADGGPRVSFYQLSHFLQCKEDNPDFDGVDCAIFESPYPMTMALSVLVTIEMCNALNSLSENQSLLRMPPWENIWLVGSICLSMSLHFLILYVEPLPLIFQITPLNLTQWLMVLKISLPVILMDETLKFVARNYLEQPGKECVQPATKSSCSLSACTDGISWPFVLLIMPLVVWVYSTDTNFSDMFWS.

Residues 1-48 are Cytoplasmic-facing; that stretch reads MENAHTKTVEEVLGHFGVNESTGLSLEQVKKLKERWGSNELPAEEGKT. The residue at position 38 (serine 38) is a Phosphoserine. Residues 49 to 69 form a helical membrane-spanning segment; sequence LLELVIEQFEDLLVRILLLAA. At 70 to 89 the chain is on the lumenal side; it reads CISFVLAWFEEGEETITAFV. The helical transmembrane segment at 90-110 threads the bilayer; that stretch reads EPFVILLILVANAIVGVWQER. The Cytoplasmic portion of the chain corresponds to 111 to 253; it reads NAENAIEALK…QERTPLQQKL (143 aa). The chain crosses the membrane as a helical span at residues 254-273; that stretch reads DEFGEQLSKVISLICIAVWI. Residues 274–295 are Lumenal-facing; that stretch reads INIGHFNDPVHGGSWIRGAIYY. Residues tyrosine 294 and tyrosine 295 each carry the 3'-nitrotyrosine modification. The chain crosses the membrane as a helical span at residues 296-313; sequence FKIAVALAVAAIPEGLPA. Residues valine 304, alanine 305, isoleucine 307, and glutamate 309 each coordinate Ca(2+). The Cytoplasmic portion of the chain corresponds to 314 to 756; the sequence is VITTCLALGT…EEGRAIYNNM (443 aa). Aspartate 351 functions as the 4-aspartylphosphate intermediate in the catalytic mechanism. Positions 351 and 353 each coordinate Mg(2+). Residue threonine 353 coordinates ATP. Threonine 441 is modified (phosphothreonine). ATP is bound by residues glutamate 442, arginine 489, and lysine 514. Position 531 is a phosphoserine (serine 531). Residue arginine 559 participates in ATP binding. The interaction with HAX1 stretch occupies residues 575 to 594; the sequence is MHLEDSANFIKYETNLTFVG. Serine 580 bears the Phosphoserine mark. Positions 624, 625, and 626 each coordinate ATP. A phosphoserine mark is found at serine 661 and serine 663. Residues arginine 677 and lysine 683 each contribute to the ATP site. Aspartate 702 provides a ligand contact to Mg(2+). ATP is bound at residue asparagine 705. The chain crosses the membrane as a helical span at residues 757–776; sequence KQFIRYLISSNVGEVVCIFL. Ca(2+) is bound by residues asparagine 767 and glutamate 770. The Lumenal segment spans residues 777 to 786; the sequence is TAALGFPEAL. A helical membrane pass occupies residues 787 to 807; sequence IPVQLLWVNLVTDGLPATALG. The interaction with PLN stretch occupies residues 787–807; the sequence is IPVQLLWVNLVTDGLPATALG. The segment at 788–1044 is interaction with TMEM64 and PDIA3; that stretch reads PVQLLWVNLV…DTNFSDMFWS (257 aa). The Ca(2+) site is built by asparagine 795, threonine 798, and aspartate 799. Over 808–827 the chain is Cytoplasmic; that stretch reads FNPPDLDIMNKPPRNPKEPL. Residues 828 to 850 form a helical membrane-spanning segment; sequence ISGWLFFRYLAIGCYVGAATVGA. The Lumenal segment spans residues 851 to 896; it reads AAWWFIAADGGPRVSFYQLSHFLQCKEDNPDFDGVDCAIFESPYPM. An intrachain disulfide couples cysteine 875 to cysteine 887. The chain crosses the membrane as a helical span at residues 897–916; sequence TMALSVLVTIEMCNALNSLS. Position 907 (glutamate 907) interacts with Ca(2+). Topologically, residues 917-929 are cytoplasmic; the sequence is ENQSLLRMPPWEN. A helical membrane pass occupies residues 930–948; that stretch reads IWLVGSICLSMSLHFLILY. Residues 931-942 are interaction with PLN; the sequence is WLVGSICLSMSL. Residues 949 to 963 are Lumenal-facing; the sequence is VEPLPLIFQITPLNL. Residues 964–984 traverse the membrane as a helical segment; sequence TQWLMVLKISLPVILMDETLK. The Cytoplasmic segment spans residues 985-1044; that stretch reads FVARNYLEQPGKECVQPATKSSCSLSACTDGISWPFVLLIMPLVVWVYSTDTNFSDMFWS.

Belongs to the cation transport ATPase (P-type) (TC 3.A.3) family. Type IIA subfamily. As to quaternary structure, interacts with sarcolipin (SLN); the interaction inhibits ATP2A2 Ca(2+) affinity. Interacts with phospholamban (PLN); the interaction inhibits ATP2A2 Ca(2+) affinity. Interacts with myoregulin (MRLN). Interacts with ARLN and ERLN; the interactions inhibit ATP2A2 Ca(2+) affinity. Interacts with STRIT1/DWORF; the interaction results in activation of ATP2A2. Interacts with the monomeric forms of SLN, PLN, ARLN, ERLN and STRI1/DWORF. Interacts with HAX1. Interacts with S100A8 and S100A9. Interacts with SLC35G1 and STIM1. Interacts with TMEM203. Interacts with TMEM64 and PDIA3. Interacts with TMX1. Interacts with TMX2. Interacts with VMP1; VMP1 competes with PLN and SLN to prevent them from forming an inhibitory complex with ATP2A2. Interacts with ULK1. Interacts with S100A1 in a Ca(2+)-dependent manner. Interacts with TUNAR. Interacts with FLVCR2; this interaction occurs in the absence of heme and promotes ATP2A2 proteasomal degradation; this complex is dissociated upon heme binding. Interacts with FNIP1. Interacts with TRAM2 (via C-terminus). Mg(2+) serves as cofactor. Nitrated under oxidative stress. Nitration on the two tyrosine residues inhibits catalytic activity. In terms of processing, serotonylated on Gln residues by TGM2 in response to hypoxia, leading to its inactivation. In terms of tissue distribution, isoform 2 is highly expressed in heart and slow twitch skeletal muscle. Isoform 2 is widely expressed.

Its subcellular location is the endoplasmic reticulum membrane. The protein resides in the sarcoplasmic reticulum membrane. It catalyses the reaction Ca(2+)(in) + ATP + H2O = Ca(2+)(out) + ADP + phosphate + H(+). Its activity is regulated as follows. Has different conformational states with differential Ca2+ affinity. The E1 conformational state (active form) shows high Ca(2+) affinity, while the E2 state exhibits low Ca(2+) affinity. Binding of ATP allosterically increases its affinity for subsequent binding of Ca2+. Reversibly inhibited by phospholamban (PLN) at low calcium concentrations. PLN inhibits ATP2A2 Ca(2+) affinity by disrupting its allosteric activation by ATP. Inhibited by sarcolipin (SLN) and myoregulin (MRLN). The inhibition is blocked by VMP1. Enhanced by STRIT1/DWORF; STRIT1 increases activity by displacing sarcolipin (SLN), phospholamban (PLN) and myoregulin (MRLN). Stabilizes SERCA2 in its E2 state. This magnesium-dependent enzyme catalyzes the hydrolysis of ATP coupled with the translocation of calcium from the cytosol to the sarcoplasmic reticulum lumen. Involved in autophagy in response to starvation. Upon interaction with VMP1 and activation, controls ER-isolation membrane contacts for autophagosome formation. Also modulates ER contacts with lipid droplets, mitochondria and endosomes. In coordination with FLVCR2 mediates heme-stimulated switching from mitochondrial ATP synthesis to thermogenesis. Functionally, involved in the regulation of the contraction/relaxation cycle. Acts as a regulator of TNFSF11-mediated Ca(2+) signaling pathways via its interaction with TMEM64 which is critical for the TNFSF11-induced CREB1 activation and mitochondrial ROS generation necessary for proper osteoclast generation. Association between TMEM64 and SERCA2 in the ER leads to cytosolic Ca(2+) spiking for activation of NFATC1 and production of mitochondrial ROS, thereby triggering Ca(2+) signaling cascades that promote osteoclast differentiation and activation. The chain is Sarcoplasmic/endoplasmic reticulum calcium ATPase 2 from Mus musculus (Mouse).